A 283-amino-acid polypeptide reads, in one-letter code: Release factor glutamine methyltransferase (283 aa).

Residues 120–124, D143, F172, and N187 contribute to the S-adenosyl-L-methionine site; that span reads GTGSG. 187–190 provides a ligand contact to substrate; it reads NPPY.

It belongs to the protein N5-glutamine methyltransferase family. PrmC subfamily.

The enzyme catalyses L-glutaminyl-[peptide chain release factor] + S-adenosyl-L-methionine = N(5)-methyl-L-glutaminyl-[peptide chain release factor] + S-adenosyl-L-homocysteine + H(+). In terms of biological role, methylates the class 1 translation termination release factors RF1/PrfA and RF2/PrfB on the glutamine residue of the universally conserved GGQ motif. The chain is Release factor glutamine methyltransferase from Moorella thermoacetica (strain ATCC 39073 / JCM 9320).